A 168-amino-acid polypeptide reads, in one-letter code: RNA pyrophosphohydrolase (168 aa).

Residues 8–159 (PYRTCVGVML…KRPVYERVVK (152 aa)) enclose the Nudix hydrolase domain. The Nudix box signature appears at 47–68 (GGVDPGEDTWKAAKRELYEETS).

This sequence belongs to the Nudix hydrolase family. RppH subfamily. Requires a divalent metal cation as cofactor.

Functionally, accelerates the degradation of transcripts by removing pyrophosphate from the 5'-end of triphosphorylated RNA, leading to a more labile monophosphorylated state that can stimulate subsequent ribonuclease cleavage. This is RNA pyrophosphohydrolase from Rhodopseudomonas palustris (strain ATCC BAA-98 / CGA009).